Consider the following 205-residue polypeptide: Imidazoleglycerol-phosphate dehydratase (205 aa).

A disordered region spans residues 1–27 (MKQASPRAGGAKARRGQVARKTKETDV).

It belongs to the imidazoleglycerol-phosphate dehydratase family.

Its subcellular location is the cytoplasm. The catalysed reaction is D-erythro-1-(imidazol-4-yl)glycerol 3-phosphate = 3-(imidazol-4-yl)-2-oxopropyl phosphate + H2O. It participates in amino-acid biosynthesis; L-histidine biosynthesis; L-histidine from 5-phospho-alpha-D-ribose 1-diphosphate: step 6/9. In Anaeromyxobacter sp. (strain Fw109-5), this protein is Imidazoleglycerol-phosphate dehydratase.